Here is a 179-residue protein sequence, read N- to C-terminus: Orotate phosphoribosyltransferase (179 aa).

5-phospho-alpha-D-ribose 1-diphosphate is bound by residues arginine 94, lysine 95, lysine 98, histidine 100, and 120–128; that span reads EDTSTTGNS. Orotate contacts are provided by threonine 124 and arginine 152.

The protein belongs to the purine/pyrimidine phosphoribosyltransferase family. PyrE subfamily. Homodimer. Mg(2+) is required as a cofactor.

It catalyses the reaction orotidine 5'-phosphate + diphosphate = orotate + 5-phospho-alpha-D-ribose 1-diphosphate. Its pathway is pyrimidine metabolism; UMP biosynthesis via de novo pathway; UMP from orotate: step 1/2. Its function is as follows. Catalyzes the transfer of a ribosyl phosphate group from 5-phosphoribose 1-diphosphate to orotate, leading to the formation of orotidine monophosphate (OMP). The protein is Orotate phosphoribosyltransferase of Mycobacterium bovis (strain ATCC BAA-935 / AF2122/97).